We begin with the raw amino-acid sequence, 335 residues long: E3 ubiquitin-protein ligase NLA (335 aa).

Positions 1-154 (MKFCKKYEEY…ESRQGQAFKT (154 aa)) constitute an SPX domain. The segment at 231 to 280 (CSICLDTVFDPISLTCGHIYCYMCACSAASVNVVDGLKTAEATEKCPLCR) adopts an RING-type zinc-finger fold.

As to quaternary structure, interacts with UBC8. Interacts with PHT1-1 and PHT1-4. Forms homodimers (via RING domain). Interacts with UBC24/PHO2. Interacts with NPF2.13/NRT1.7. Interacts with NAC92/ORE1. As to expression, high expression in roots and stems, medium in seedlings, flowers, rosette and cauline leaves, and very low in siliques. Detected in cotyledons, hypocotyls, pedicel, receptacle, pistil, sepal, filament of stamen and at the two ends of developing siliques.

It is found in the nucleus speckle. It localises to the nucleus. Its subcellular location is the cell membrane. The enzyme catalyses S-ubiquitinyl-[E2 ubiquitin-conjugating enzyme]-L-cysteine + [acceptor protein]-L-lysine = [E2 ubiquitin-conjugating enzyme]-L-cysteine + N(6)-ubiquitinyl-[acceptor protein]-L-lysine.. It functions in the pathway protein modification; protein ubiquitination. Functionally, E3 ubiquitin-protein ligase that mediates E2-dependent protein ubiquitination. Plays a role in salicylic acid-mediated negative feedback regulation of salicylic acid (SA) accumulation. May be involved in the overall regulation of SA, benzoic acid and phenylpropanoid biosynthesis. Involved in defense response. May act as negative regulator of resistance to the necrotrophic fungal pathogen Plectosphaerella cucumerina by modulating the accumulation of the phytoalexin camalexin and the salicylic acid- and jasmonate- dependent defense pathways. Controls the adaptability to nitrogen limitation by channeling the phenylpropanoid metabolic flux to the induced anthocyanin synthesis. Involved in the regulation of inorganic phosphate (Pi) homeostasis in a nitrate-dependent fashion. Directs the ubiquitination and subsequent degradation of the plasma membrane-localized inorganic phosphate transporters PHT1-1 and PHT1-4, to maintain phosphate homeostasis. The ubiquitination of PHTs triggers their clathrin-dependent endocytosis and trafficking to the vacuole through the endosomal pathway for degradation. Functions cooperatively with UBC24/PHO2 to regulate the abundance of PHT1-1, PHT1-2 and PHT1-3 in different subcellular compartments. Regulates Pi homeostasis by mediating, cooperatively with UBC24/PHO2, polyubiquitination of PHT1-4 and its targeting for degradation. Directs the polyubiquitination and subsequent degradation of the plasma membrane-localized nitrate transporter NPF2.13/NRT1.7, to help plants to adapt to nitrogen deficiency by regulating the source-to-sink remobilization of nitrate. Regulates leaf senescence during nitrogen deficiency by mediating, cooperatively with UBC24/PHO2, polyubiquitination of NAC92/ORE1 and its targeting for degradation. The polypeptide is E3 ubiquitin-protein ligase NLA (Arabidopsis thaliana (Mouse-ear cress)).